The following is a 301-amino-acid chain: Phosphatidylserine decarboxylase proenzyme (301 aa).

Catalysis depends on charge relay system; for autoendoproteolytic cleavage activity residues Asp-117, His-173, and Ser-260. The active-site Schiff-base intermediate with substrate; via pyruvic acid; for decarboxylase activity is Ser-260. Pyruvic acid (Ser); by autocatalysis is present on Ser-260.

It belongs to the phosphatidylserine decarboxylase family. PSD-B subfamily. Prokaryotic type II sub-subfamily. Heterodimer of a large membrane-associated beta subunit and a small pyruvoyl-containing alpha subunit. It depends on pyruvate as a cofactor. Is synthesized initially as an inactive proenzyme. Formation of the active enzyme involves a self-maturation process in which the active site pyruvoyl group is generated from an internal serine residue via an autocatalytic post-translational modification. Two non-identical subunits are generated from the proenzyme in this reaction, and the pyruvate is formed at the N-terminus of the alpha chain, which is derived from the carboxyl end of the proenzyme. The autoendoproteolytic cleavage occurs by a canonical serine protease mechanism, in which the side chain hydroxyl group of the serine supplies its oxygen atom to form the C-terminus of the beta chain, while the remainder of the serine residue undergoes an oxidative deamination to produce ammonia and the pyruvoyl prosthetic group on the alpha chain. During this reaction, the Ser that is part of the protease active site of the proenzyme becomes the pyruvoyl prosthetic group, which constitutes an essential element of the active site of the mature decarboxylase.

The protein localises to the cell membrane. The catalysed reaction is a 1,2-diacyl-sn-glycero-3-phospho-L-serine + H(+) = a 1,2-diacyl-sn-glycero-3-phosphoethanolamine + CO2. Its pathway is phospholipid metabolism; phosphatidylethanolamine biosynthesis; phosphatidylethanolamine from CDP-diacylglycerol: step 2/2. In terms of biological role, catalyzes the formation of phosphatidylethanolamine (PtdEtn) from phosphatidylserine (PtdSer). The sequence is that of Phosphatidylserine decarboxylase proenzyme from Chlamydia trachomatis serovar L2 (strain ATCC VR-902B / DSM 19102 / 434/Bu).